The following is a 103-amino-acid chain: Putative defensin-like protein 305 (103 aa).

Positions 1-31 (MREEILEIFLLVNFVFILCTSIMVRIRYVSC) are cleaved as a signal peptide. 3 cysteine pairs are disulfide-bonded: C31–C51, C37–C56, and C42–C58.

This sequence belongs to the DEFL family.

Its subcellular location is the secreted. This chain is Putative defensin-like protein 305, found in Arabidopsis thaliana (Mouse-ear cress).